A 141-amino-acid polypeptide reads, in one-letter code: Hemoglobin subunit alpha (141 aa).

The Globin domain maps to 1–141 (VLSPADKSNV…VSTVLTSKYR (141 aa)). Ser3 is subject to Phosphoserine. 2 positions are modified to N6-succinyllysine: Lys7 and Lys11. N6-acetyllysine; alternate is present on Lys16. Lys16 carries the N6-succinyllysine; alternate modification. Position 24 is a phosphotyrosine (Tyr24). Phosphoserine is present on Ser35. Residue Lys40 is modified to N6-succinyllysine. Ser49 bears the Phosphoserine mark. An O2-binding site is contributed by His58. His87 serves as a coordination point for heme b. At Ser102 the chain carries Phosphoserine. Thr108 carries the post-translational modification Phosphothreonine. 2 positions are modified to phosphoserine: Ser124 and Ser131. 2 positions are modified to phosphothreonine: Thr134 and Thr137. At Ser138 the chain carries Phosphoserine.

This sequence belongs to the globin family. As to quaternary structure, heterotetramer of two alpha chains and two beta chains. As to expression, red blood cells.

Involved in oxygen transport from the lung to the various peripheral tissues. Its function is as follows. Hemopressin acts as an antagonist peptide of the cannabinoid receptor CNR1. Hemopressin-binding efficiently blocks cannabinoid receptor CNR1 and subsequent signaling. The chain is Hemoglobin subunit alpha (HBA) from Mico argentatus (Silvery marmoset).